The following is a 320-amino-acid chain: Lipoyl synthase (320 aa).

The segment at 1 to 27 is disordered; it reads MRVEIDHRNSGGGKLRHPEKQHRPDNP. Residues 16 to 25 show a composition bias toward basic and acidic residues; it reads RHPEKQHRPD. [4Fe-4S] cluster-binding residues include cysteine 61, cysteine 66, cysteine 72, cysteine 87, cysteine 91, cysteine 94, and serine 300. The Radical SAM core domain maps to 73–289; it reads WSQRHATMMI…AAMARAKGFL (217 aa).

This sequence belongs to the radical SAM superfamily. Lipoyl synthase family. The cofactor is [4Fe-4S] cluster.

It localises to the cytoplasm. It catalyses the reaction [[Fe-S] cluster scaffold protein carrying a second [4Fe-4S](2+) cluster] + N(6)-octanoyl-L-lysyl-[protein] + 2 oxidized [2Fe-2S]-[ferredoxin] + 2 S-adenosyl-L-methionine + 4 H(+) = [[Fe-S] cluster scaffold protein] + N(6)-[(R)-dihydrolipoyl]-L-lysyl-[protein] + 4 Fe(3+) + 2 hydrogen sulfide + 2 5'-deoxyadenosine + 2 L-methionine + 2 reduced [2Fe-2S]-[ferredoxin]. It participates in protein modification; protein lipoylation via endogenous pathway; protein N(6)-(lipoyl)lysine from octanoyl-[acyl-carrier-protein]: step 2/2. Functionally, catalyzes the radical-mediated insertion of two sulfur atoms into the C-6 and C-8 positions of the octanoyl moiety bound to the lipoyl domains of lipoate-dependent enzymes, thereby converting the octanoylated domains into lipoylated derivatives. The chain is Lipoyl synthase from Acidiphilium cryptum (strain JF-5).